Here is a 113-residue protein sequence, read N- to C-terminus: Sporulation membrane protein YtrH (113 aa).

A run of 3 helical transmembrane segments spans residues 16–36, 51–71, and 86–106; these read FIAL…AYLA, LKIW…YSFE, and LLLI…ISWL.

Its subcellular location is the forespore outer membrane. Functionally, involved in sporulation. May contribute to cortex formation or stability. The chain is Sporulation membrane protein YtrH (ytrH) from Bacillus subtilis (strain 168).